Here is a 149-residue protein sequence, read N- to C-terminus: Nucleoside diphosphate kinase (149 aa).

Positions 9, 57, 85, 91, 102, and 112 each coordinate ATP. Catalysis depends on His115, which acts as the Pros-phosphohistidine intermediate.

Belongs to the NDK family. As to quaternary structure, homotetramer. It depends on Mg(2+) as a cofactor.

It is found in the cytoplasm. It carries out the reaction a 2'-deoxyribonucleoside 5'-diphosphate + ATP = a 2'-deoxyribonucleoside 5'-triphosphate + ADP. The catalysed reaction is a ribonucleoside 5'-diphosphate + ATP = a ribonucleoside 5'-triphosphate + ADP. In terms of biological role, major role in the synthesis of nucleoside triphosphates other than ATP. The ATP gamma phosphate is transferred to the NDP beta phosphate via a ping-pong mechanism, using a phosphorylated active-site intermediate. This Staphylococcus saprophyticus subsp. saprophyticus (strain ATCC 15305 / DSM 20229 / NCIMB 8711 / NCTC 7292 / S-41) protein is Nucleoside diphosphate kinase.